Consider the following 269-residue polypeptide: NAD kinase (269 aa).

The active-site Proton acceptor is D62. Residues 62–63 (DG), 130–131 (NE), K141, R158, D160, 171–176 (TAYAMS), A195, and Q229 contribute to the NAD(+) site.

Belongs to the NAD kinase family. Requires a divalent metal cation as cofactor.

It is found in the cytoplasm. It catalyses the reaction NAD(+) + ATP = ADP + NADP(+) + H(+). Functionally, involved in the regulation of the intracellular balance of NAD and NADP, and is a key enzyme in the biosynthesis of NADP. Catalyzes specifically the phosphorylation on 2'-hydroxyl of the adenosine moiety of NAD to yield NADP. This Methanospirillum hungatei JF-1 (strain ATCC 27890 / DSM 864 / NBRC 100397 / JF-1) protein is NAD kinase.